The following is a 1174-amino-acid chain: Pecanex-like protein 4 (1174 aa).

14 helical membrane-spanning segments follow: residues 40-60 (IYVN…TGTL), 72-92 (AAAL…LISV), 140-160 (TVFH…YLLP), 173-193 (TAVL…SLIV), 217-237 (LYIF…NIPA), 244-264 (ILHI…LPPP), 284-304 (SMST…AAVV), 307-327 (FIPS…LLSL), 366-386 (FLFI…HHYV), 394-414 (SGAQ…VWIL), 451-471 (IGAV…VAFL), 543-563 (LIQF…LWTE), 580-600 (VFAP…SPLL), and 643-663 (LTAA…LPGS). The span at 785-797 (PSTQENKTENTGE) shows a compositional bias: polar residues. Residues 785–875 (PSTQENKTEN…DDHSAGTGPK (91 aa)) form a disordered region. N790 carries an N-linked (GlcNAc...) asparagine glycan. Positions 798–810 (ASPALPPAANSSP) are enriched in low complexity. Basic and acidic residues predominate over residues 835 to 846 (PAIKNRKEKLQS). N-linked (GlcNAc...) asparagine glycosylation is found at N1122 and N1149.

The protein belongs to the pecanex family.

It is found in the membrane. This Mus musculus (Mouse) protein is Pecanex-like protein 4.